The chain runs to 462 residues: A-type ATP synthase subunit B (462 aa).

This sequence belongs to the ATPase alpha/beta chains family. As to quaternary structure, has multiple subunits with at least A(3), B(3), C, D, E, F, H, I and proteolipid K(x).

The protein resides in the cell membrane. Component of the A-type ATP synthase that produces ATP from ADP in the presence of a proton gradient across the membrane. The B chain is a regulatory subunit. The polypeptide is A-type ATP synthase subunit B (Cenarchaeum symbiosum (strain A)).